Consider the following 504-residue polypeptide: Anaerobic nitric oxide reductase transcription regulator NorR (504 aa).

Residue Asp57 is modified to 4-aspartylphosphate. A Sigma-54 factor interaction domain is found at 187–416; the sequence is MIGLSPGMTQ…LEHAIHRAVV (230 aa). Residues 215-222 and 278-287 each bind ATP; these read GETGTGKE and ADNGTLFLDE. The segment at residues 479–498 is a DNA-binding region (H-T-H motif); that stretch reads WAACARMLETDVANLHRLAK.

Its pathway is nitrogen metabolism; nitric oxide reduction. In terms of biological role, required for the expression of anaerobic nitric oxide (NO) reductase, acts as a transcriptional activator for at least the norVW operon. Activation also requires sigma-54. The polypeptide is Anaerobic nitric oxide reductase transcription regulator NorR (Escherichia coli O157:H7).